Consider the following 384-residue polypeptide: Putative RNA methyltransferase slr0064 (384 aa).

Residues leucine 53–serine 164 enclose the THUMP domain.

Belongs to the methyltransferase superfamily.

This chain is Putative RNA methyltransferase slr0064, found in Synechocystis sp. (strain ATCC 27184 / PCC 6803 / Kazusa).